We begin with the raw amino-acid sequence, 374 residues long: uncharacterized protein (374 aa).

It belongs to the mimivirus L41 family.

This is an uncharacterized protein from Acanthamoeba polyphaga (Amoeba).